A 256-amino-acid polypeptide reads, in one-letter code: Triosephosphate isomerase (256 aa).

N9–K11 serves as a coordination point for substrate. H97 functions as the Electrophile in the catalytic mechanism. The active-site Proton acceptor is the E169. Residues G175, S214, and G235–G236 each bind substrate.

This sequence belongs to the triosephosphate isomerase family. Homodimer.

It localises to the cytoplasm. The enzyme catalyses D-glyceraldehyde 3-phosphate = dihydroxyacetone phosphate. Its pathway is carbohydrate biosynthesis; gluconeogenesis. The protein operates within carbohydrate degradation; glycolysis; D-glyceraldehyde 3-phosphate from glycerone phosphate: step 1/1. Its function is as follows. Involved in the gluconeogenesis. Catalyzes stereospecifically the conversion of dihydroxyacetone phosphate (DHAP) to D-glyceraldehyde-3-phosphate (G3P). This chain is Triosephosphate isomerase, found in Vibrio parahaemolyticus serotype O3:K6 (strain RIMD 2210633).